The chain runs to 85 residues: U4-theraphotoxin-Hhn1a (85 aa).

The first 22 residues, 1-22 (MKVTLIAILTCAAVLVLHTTAA), serve as a signal peptide directing secretion. Residues 23-48 (EELEAEGQLMEVGMPDTELAAVDEER) constitute a propeptide that is removed on maturation. 3 cysteine pairs are disulfide-bonded: Cys52–Cys66, Cys56–Cys77, and Cys71–Cys82.

This sequence belongs to the neurotoxin 12 (Hwtx-2) family. 02 (Hwtx-2) subfamily. Monomer. In terms of tissue distribution, expressed by the venom gland.

The protein resides in the secreted. Neurotoxin active on both insects and mammals. This chain is U4-theraphotoxin-Hhn1a, found in Cyriopagopus hainanus (Chinese bird spider).